The sequence spans 319 residues: Ribose-phosphate pyrophosphokinase (319 aa).

ATP contacts are provided by residues 41-43 (DGE) and 100-101 (RQ). Mg(2+) is bound by residues His-134 and Asp-176. Lys-199 is an active-site residue. D-ribose 5-phosphate contacts are provided by residues Arg-201, Asp-225, and 229 to 233 (DTAGT).

It belongs to the ribose-phosphate pyrophosphokinase family. Class I subfamily. As to quaternary structure, homohexamer. It depends on Mg(2+) as a cofactor.

It localises to the cytoplasm. It catalyses the reaction D-ribose 5-phosphate + ATP = 5-phospho-alpha-D-ribose 1-diphosphate + AMP + H(+). It participates in metabolic intermediate biosynthesis; 5-phospho-alpha-D-ribose 1-diphosphate biosynthesis; 5-phospho-alpha-D-ribose 1-diphosphate from D-ribose 5-phosphate (route I): step 1/1. Functionally, involved in the biosynthesis of the central metabolite phospho-alpha-D-ribosyl-1-pyrophosphate (PRPP) via the transfer of pyrophosphoryl group from ATP to 1-hydroxyl of ribose-5-phosphate (Rib-5-P). The polypeptide is Ribose-phosphate pyrophosphokinase (Clostridium perfringens (strain 13 / Type A)).